A 145-amino-acid chain; its full sequence is 3-dehydroquinate dehydratase (145 aa).

Tyrosine 23 (proton acceptor) is an active-site residue. Substrate-binding residues include asparagine 74, histidine 80, and aspartate 87. Histidine 100 functions as the Proton donor in the catalytic mechanism. Residues 101 to 102 (LS) and arginine 111 contribute to the substrate site.

It belongs to the type-II 3-dehydroquinase family. In terms of assembly, homododecamer.

It catalyses the reaction 3-dehydroquinate = 3-dehydroshikimate + H2O. Its pathway is metabolic intermediate biosynthesis; chorismate biosynthesis; chorismate from D-erythrose 4-phosphate and phosphoenolpyruvate: step 3/7. In terms of biological role, catalyzes a trans-dehydration via an enolate intermediate. This is 3-dehydroquinate dehydratase from Bacillus licheniformis (strain ATCC 14580 / DSM 13 / JCM 2505 / CCUG 7422 / NBRC 12200 / NCIMB 9375 / NCTC 10341 / NRRL NRS-1264 / Gibson 46).